Here is a 274-residue protein sequence, read N- to C-terminus: (R)-stereoselective amidase (274 aa).

The 234-residue stretch at 1 to 234 (MKIELVQLAG…EVRHVVELDL (234 aa)) folds into the CN hydrolase domain. The active-site Proton acceptor is the glutamate 40. Lysine 108 serves as the catalytic Proton donor. Cysteine 140 serves as the catalytic Nucleophile.

In terms of assembly, monomer.

It carries out the reaction (R)-piperazine-2-carboxamide + H2O = (R)-piperazine-2-carboxylate + NH4(+). The catalysed reaction is beta-alaninamide + H2O = beta-alanine + NH4(+). Its activity is regulated as follows. Completely inhibited by p-chloromercuribenzoate, N-ethylmaleimide, MnSO(4), MnCl(2), CoCl(2), NiCl(2), CuSO(4), CuCl(2), ZnSO(4), ZnCl(2), AgNO(3), CdCl(2), HgCl(2) and PbCl(2). Partially inhibited by FeCl(3) and Fe(NH(4))(2)(SO(4))(2). Slightly enhanced by dithiothreitol. Unaffected by LiBr, H(2)BO(3), NaCl, MgSO(4), MgCl(2), AlCl(3), KCl, CaCl(2), CrCl(3), RbCl, Na(2)MoO(4), (NH(4))(6)Mo(7)O(24), CsCl and BaCl(2). Unaffected by the chelating agents o-phenanthroline, 8-hydroxyquinoline, enthylenediaminetetraacetic acid and alpha,alpha'-dipyridyl. Not inhibited by the carbonyl reagents hydroxylamine, phenylhydrazine, hydrazine, D,L-penicillamine and D-cycloserine. Not affected by the serine protease inhibitor phenylmethanesulfonyl fluoride, the serine/cysteine protease inhibitor leupeptine or the aspartic protease inhibitor pepstatin. In terms of biological role, hydrolyzes (R)-piperazine-2-carboxamide and (R)-piperazine-2-tert-butylcarboxamide with strict R-stereoselectivity. Also active towards beta-alaninamide, piperidine-3-carboxmide, D-glutaminamide and slightly active towards L-glutaminamide and piperidine-4-carboxamide. This Pseudomonas sp protein is (R)-stereoselective amidase.